The primary structure comprises 121 residues: UPF0738 protein BPUM_1088 (121 aa).

This sequence belongs to the UPF0738 family.

In Bacillus pumilus (strain SAFR-032), this protein is UPF0738 protein BPUM_1088.